Consider the following 469-residue polypeptide: DNA-binding transcriptional regulator NtrC (469 aa).

The 115-residue stretch at 5 to 119 folds into the Response regulatory domain; sequence IVWVVDDDSS…EAVALVERAI (115 aa). D54 carries the 4-aspartylphosphate modification. One can recognise a Sigma-54 factor interaction domain in the interval 140–369; the sequence is IIGEAPAMQD…LENTCRWLTV (230 aa). ATP-binding positions include 168–175 and 231–240; these read GESGTGKE and ADGGTLFLDE. Positions 445 to 464 form a DNA-binding region, H-T-H motif; the sequence is KQEAARLLGWGRNTLTRKLK.

In terms of processing, phosphorylated and dephosphorylated by NtrB.

It localises to the cytoplasm. Member of the two-component regulatory system NtrB/NtrC, which controls expression of the nitrogen-regulated (ntr) genes in response to nitrogen limitation. Phosphorylated NtrC binds directly to DNA and stimulates the formation of open promoter-sigma54-RNA polymerase complexes. This chain is DNA-binding transcriptional regulator NtrC (glnG), found in Escherichia coli O157:H7.